The following is a 211-amino-acid chain: Uracil phosphoribosyltransferase (211 aa).

Residues R79, R104, and 131-139 (DPMLATGGS) each bind 5-phospho-alpha-D-ribose 1-diphosphate. Residues I196 and 201–203 (GDA) contribute to the uracil site. Residue D202 participates in 5-phospho-alpha-D-ribose 1-diphosphate binding.

It belongs to the UPRTase family. It depends on Mg(2+) as a cofactor.

The catalysed reaction is UMP + diphosphate = 5-phospho-alpha-D-ribose 1-diphosphate + uracil. The protein operates within pyrimidine metabolism; UMP biosynthesis via salvage pathway; UMP from uracil: step 1/1. Its activity is regulated as follows. Allosterically activated by GTP. Its function is as follows. Catalyzes the conversion of uracil and 5-phospho-alpha-D-ribose 1-diphosphate (PRPP) to UMP and diphosphate. The sequence is that of Uracil phosphoribosyltransferase from Lactococcus lactis subsp. cremoris (strain MG1363).